A 194-amino-acid polypeptide reads, in one-letter code: Early growth response protein 1 (194 aa).

3 consecutive C2H2-type zinc fingers follow at residues 1–18, 24–46, and 52–74; these read CDRRFSRSDELTRHIRIH, FQCRICMRNFSRSDHLTTHIRTH, and FACDICGRKFARSDERKRHTKIH. The interval 66-88 is disordered; it reads ERKRHTKIHLRQKDKKVEKAASV. The segment covering 69–79 has biased composition (basic residues); it reads RHTKIHLRQKD.

Belongs to the EGR C2H2-type zinc-finger protein family.

The protein resides in the nucleus. Its subcellular location is the cytoplasm. Functionally, transcriptional regulator. Recognizes and binds to the DNA sequence 5'-GCG(T/G)GGGCG-3'(EGR-site) in the promoter region of target genes. Binds double-stranded target DNA, irrespective of the cytosine methylation status. Regulates the transcription of numerous target genes, and thereby plays an important role in regulating the response to growth factors, DNA damage, and ischemia. Plays a role in the regulation of cell survival, proliferation and cell death. Mediates responses to ischemia and hypoxia; regulates the expression of proteins that are involved in inflammatory processes. Plays a role in regulating the expression of circadian clock genes. The sequence is that of Early growth response protein 1 (EGR1) from Coturnix japonica (Japanese quail).